Reading from the N-terminus, the 1128-residue chain is Lysylphosphatidylglycerol biosynthesis bifunctional protein LysX (1128 aa).

The tract at residues 1–47 (MDNPPPTGVAPRHLPPGSVHTGKVTASLSHRRPDSVQDAPPAPVPHR) is disordered. Residues 1–632 (MDNPPPTGVA…GLHADGSPPD (632 aa)) form a phosphatidylglycerol lysyltransferase region. A run of 6 helical transmembrane segments spans residues 55–75 (VPHI…LWSL), 97–117 (APDT…AIAS), 121–141 (IAWW…GLRF), 147–167 (INAL…IAAW), 184–204 (GVLV…VEVF), and 240–260 (FVNV…VLTL). Residues 619–644 (DTLTGLHADGSPPDWPKPDLLDSGPR) form a disordered region. Residues 633–1128 (WPKPDLLDSG…TLPFPLVKPR (496 aa)) form a lysine--tRNA ligase region. A compositionally biased stretch (basic and acidic residues) spans 634–644 (PKPDLLDSGPR). Mg(2+)-binding residues include Asp-1040 and Glu-1047.

The protein in the N-terminal section; belongs to the LPG synthetase family. This sequence in the C-terminal section; belongs to the class-II aminoacyl-tRNA synthetase family. Requires Mg(2+) as cofactor.

It is found in the cell membrane. It catalyses the reaction tRNA(Lys) + L-lysine + ATP = L-lysyl-tRNA(Lys) + AMP + diphosphate. The catalysed reaction is L-lysyl-tRNA(Lys) + a 1,2-diacyl-sn-glycero-3-phospho-(1'-sn-glycerol) = a 1,2-diacyl-sn-glycero-3-phospho-1'-(3'-O-L-lysyl)-sn-glycerol + tRNA(Lys). Its function is as follows. Catalyzes the production of L-lysyl-tRNA(Lys)transfer and the transfer of a lysyl group from L-lysyl-tRNA(Lys) to membrane-bound phosphatidylglycerol (PG), which produces lysylphosphatidylglycerol (LPG), one of the components of the bacterial membrane with a positive net charge. LPG synthesis contributes to the resistance to cationic antimicrobial peptides (CAMPs) and likely protects M.tuberculosis against the CAMPs produced by competiting microorganisms (bacteriocins). In fact, the modification of anionic phosphatidylglycerol with positively charged L-lysine results in repulsion of the peptides. This is Lysylphosphatidylglycerol biosynthesis bifunctional protein LysX (lysX) from Nocardia farcinica (strain IFM 10152).